Consider the following 327-residue polypeptide: Ferrochelatase (327 aa).

The Fe cation site is built by H187 and E265.

The protein belongs to the ferrochelatase family.

It is found in the cytoplasm. The catalysed reaction is heme b + 2 H(+) = protoporphyrin IX + Fe(2+). Its pathway is porphyrin-containing compound metabolism; protoheme biosynthesis; protoheme from protoporphyrin-IX: step 1/1. In terms of biological role, catalyzes the ferrous insertion into protoporphyrin IX. The sequence is that of Ferrochelatase from Chlamydia pneumoniae (Chlamydophila pneumoniae).